The primary structure comprises 132 residues: Large ribosomal subunit protein bL12 (132 aa).

The tract at residues K112–K132 is disordered.

This sequence belongs to the bacterial ribosomal protein bL12 family. As to quaternary structure, homodimer. Part of the ribosomal stalk of the 50S ribosomal subunit. Forms a multimeric L10(L12)X complex, where L10 forms an elongated spine to which 2 to 4 L12 dimers bind in a sequential fashion. Binds GTP-bound translation factors.

Its function is as follows. Forms part of the ribosomal stalk which helps the ribosome interact with GTP-bound translation factors. Is thus essential for accurate translation. The polypeptide is Large ribosomal subunit protein bL12 (Leifsonia xyli subsp. xyli (strain CTCB07)).